Reading from the N-terminus, the 443-residue chain is Na(+)-translocating NADH-quinone reductase subunit A (443 aa).

It belongs to the NqrA family. Composed of six subunits; NqrA, NqrB, NqrC, NqrD, NqrE and NqrF.

The enzyme catalyses a ubiquinone + n Na(+)(in) + NADH + H(+) = a ubiquinol + n Na(+)(out) + NAD(+). Its function is as follows. NQR complex catalyzes the reduction of ubiquinone-1 to ubiquinol by two successive reactions, coupled with the transport of Na(+) ions from the cytoplasm to the periplasm. NqrA to NqrE are probably involved in the second step, the conversion of ubisemiquinone to ubiquinol. In Mannheimia succiniciproducens (strain KCTC 0769BP / MBEL55E), this protein is Na(+)-translocating NADH-quinone reductase subunit A.